The sequence spans 459 residues: MAPTRALRLALKKQDYARAADLAIESRANRLFLLDYHDPDFWAYVSRNCYNRDKFLSAFGDKIDWNEVSASPLTTATARTFAAKLNWARVSRQPFLRQQFIYEFGDRLDMQVVSATYNNLSLAVQQKFAAALNWDRVVLSHYMLPEWFEPPICDFINFDAVAKHKHLDKSYINAPHCINKINLGVYMRNINKISDALIVYCLREGRVHELRVVSGAVPWADHMRVFDEYPGLANTLRLDWASVPAWTAACAPPAHYFRRSWPAAFEREFVNSTYWDKFIEYASGTTNAASAAFALFLFDNFKSRVDWRRLQVGDRFVNLAALHRARGPLVALEAAGDDERVWRAYGRFVSGGDAAHCELLIPINMSVRDAYRKMALVQACASQHEHDKARTCERRIALNGGEDALLNWNLLSATQQVCPFNLRHLQNANAQTYRRDNPHYVQDVYEKMIAAQMNINEFL.

This is an uncharacterized protein from Orgyia pseudotsugata (Douglas-fir tussock moth).